Consider the following 175-residue polypeptide: Translation initiation factor IF-3 (175 aa).

The protein belongs to the IF-3 family. As to quaternary structure, monomer.

The protein resides in the cytoplasm. IF-3 binds to the 30S ribosomal subunit and shifts the equilibrium between 70S ribosomes and their 50S and 30S subunits in favor of the free subunits, thus enhancing the availability of 30S subunits on which protein synthesis initiation begins. This Blochmanniella floridana protein is Translation initiation factor IF-3.